We begin with the raw amino-acid sequence, 340 residues long: GTP 3',8-cyclase (340 aa).

In terms of domain architecture, Radical SAM core spans 8–229 (KLGRPIRDLR…IEQHFEISPV (222 aa)). Arg-17 lines the GTP pocket. Residues Cys-24 and Cys-28 each contribute to the [4Fe-4S] cluster site. Tyr-30 contributes to the S-adenosyl-L-methionine binding site. [4Fe-4S] cluster is bound at residue Cys-31. Arg-71 provides a ligand contact to GTP. Position 75 (Gly-75) interacts with S-adenosyl-L-methionine. GTP is bound at residue Thr-102. Ser-126 contacts S-adenosyl-L-methionine. Lys-163 contacts GTP. Met-197 is an S-adenosyl-L-methionine binding site. Residues Cys-261 and Cys-264 each contribute to the [4Fe-4S] cluster site. Position 266 to 268 (266 to 268 (RAR)) interacts with GTP. Residue Cys-278 coordinates [4Fe-4S] cluster.

The protein belongs to the radical SAM superfamily. MoaA family. Monomer and homodimer. [4Fe-4S] cluster serves as cofactor.

It carries out the reaction GTP + AH2 + S-adenosyl-L-methionine = (8S)-3',8-cyclo-7,8-dihydroguanosine 5'-triphosphate + 5'-deoxyadenosine + L-methionine + A + H(+). The protein operates within cofactor biosynthesis; molybdopterin biosynthesis. Its function is as follows. Catalyzes the cyclization of GTP to (8S)-3',8-cyclo-7,8-dihydroguanosine 5'-triphosphate. The protein is GTP 3',8-cyclase of Staphylococcus epidermidis (strain ATCC 35984 / DSM 28319 / BCRC 17069 / CCUG 31568 / BM 3577 / RP62A).